A 521-amino-acid chain; its full sequence is BAR/IMD domain-containing adapter protein 2 (521 aa).

An IMD domain is found at 1-250 (MSLSRSEEMH…VQLMQQIASS (250 aa)). The stretch at 132–153 (DALDKCQAELKKLRKKSQGSKN) forms a coiled coil. Phosphoserine is present on residues serine 262, serine 324, serine 326, and serine 337. A disordered region spans residues 299–370 (VMNGVAGPDS…TLPRSSSMAA (72 aa)). Positions 321–335 (QPKSLSPPQSQSKLS) are enriched in low complexity. The residue at position 341 (threonine 341) is a Phosphothreonine. Position 347 is a phosphoserine (serine 347). The segment covering 349–368 (TPKNSYATTENKTLPRSSSM) has biased composition (polar residues). Position 361 is a phosphothreonine (threonine 361). A phosphoserine mark is found at serine 367, serine 385, serine 396, and serine 455. Residues 375 to 438 (NGRMRVKAIF…PFSYTRVLDS (64 aa)) enclose the SH3 domain. The tract at residues 445–480 (HMSLQQGKSSSTGNLLDKDDLAVPPPDYGTSSRAFP) is disordered. Over residues 447 to 458 (SLQQGKSSSTGN) the composition is skewed to polar residues.

In terms of assembly, homodimer. Interacts with CDC42 and RAC1 that have been activated by GTP binding. Interacts with ATN1, ADGRB1, DIAPH1, EPS8, SHANK1, SHANK2, SHANK3, TIAM1, WASF1 and WASF2. Interacts with ENAH after recruitment of CDC42. Phosphorylated on tyrosine residues by INSR in response to insulin treatment.

The protein resides in the cytoplasm. Its subcellular location is the membrane. The protein localises to the cell projection. It localises to the filopodium. It is found in the ruffle. The protein resides in the cytoskeleton. In terms of biological role, adapter protein that links membrane-bound small G-proteins to cytoplasmic effector proteins. Necessary for CDC42-mediated reorganization of the actin cytoskeleton and for RAC1-mediated membrane ruffling. Involved in the regulation of the actin cytoskeleton by WASF family members and the Arp2/3 complex. Plays a role in neurite growth. Acts syngeristically with ENAH to promote filipodia formation. Plays a role in the reorganization of the actin cytoskeleton in response to bacterial infection. Participates in actin bundling when associated with EPS8, promoting filopodial protrusions. The polypeptide is BAR/IMD domain-containing adapter protein 2 (BAIAP2) (Cricetulus griseus (Chinese hamster)).